Reading from the N-terminus, the 382-residue chain is UDP-4-amino-4-deoxy-L-arabinose--oxoglutarate aminotransferase (382 aa).

Lys182 is subject to N6-(pyridoxal phosphate)lysine.

It belongs to the DegT/DnrJ/EryC1 family. ArnB subfamily. Homodimer. Pyridoxal 5'-phosphate is required as a cofactor.

The enzyme catalyses UDP-4-amino-4-deoxy-beta-L-arabinose + 2-oxoglutarate = UDP-beta-L-threo-pentopyranos-4-ulose + L-glutamate. It participates in nucleotide-sugar biosynthesis; UDP-4-deoxy-4-formamido-beta-L-arabinose biosynthesis; UDP-4-deoxy-4-formamido-beta-L-arabinose from UDP-alpha-D-glucuronate: step 2/3. The protein operates within bacterial outer membrane biogenesis; lipopolysaccharide biosynthesis. Catalyzes the conversion of UDP-4-keto-arabinose (UDP-Ara4O) to UDP-4-amino-4-deoxy-L-arabinose (UDP-L-Ara4N). The modified arabinose is attached to lipid A and is required for resistance to polymyxin and cationic antimicrobial peptides. In Pectobacterium atrosepticum (strain SCRI 1043 / ATCC BAA-672) (Erwinia carotovora subsp. atroseptica), this protein is UDP-4-amino-4-deoxy-L-arabinose--oxoglutarate aminotransferase.